The sequence spans 444 residues: Protein kinase C and casein kinase substrate in neurons protein 1 (444 aa).

A phosphoserine mark is found at Ser-2 and Ser-79. The F-BAR domain occupies 13–283; that stretch reads EETTDSFWEV…AIRGADAQED (271 aa). Positions 26 to 275 form a coiled coil; that stretch reads KRTVKRIDDG…HVYRELEQAI (250 aa). 2 disordered regions span residues 175 to 194 and 309 to 386; these read MNSK…LQDK and LPHT…DDSK. Thr-184 carries the phosphothreonine modification. Residues 314-324 are compositionally biased toward basic and acidic residues; the sequence is TKKEKQPKKAE. Positions 329-351 are enriched in polar residues; the sequence is TNATGAVESTSQAGDRGSVSSYD. Phosphoserine occurs at positions 346, 348, 349, 361, and 365. Residues 385–444 form the SH3 domain; sequence SKGVRVRALYDYDGQEQDELSFKAGDELTKLGEEDEQGWCRGRLDSGQLGLYPANYVEAI. Tyr-394 is subject to Phosphotyrosine. A phosphoserine mark is found at Ser-405 and Ser-430.

The protein belongs to the PACSIN family. As to quaternary structure, may form heterooligomers with other PACSINs. Interacts with MAPT. Interacts with TRPV4. Interacts (via SH3 domain) with SYNJ1 and WASL. Interacts with DNM2 and DNM3. Interacts with both COBL and DBNL. Identified in a complex composed of COBL, PACSIN1 and WASL. Interacts with EHD1 and EHD3. Homodimer. Interacts (via SH3 domain) with DNM1; the interaction is reduced by DNM1 phosphorylation. Phosphorylated by casein kinase 2 (CK2) and protein kinase C (PKC). In terms of tissue distribution, highly expressed in brain and, at much lower levels, in heart and pancreas.

Its subcellular location is the cytoplasm. The protein localises to the cell projection. The protein resides in the synapse. It localises to the synaptosome. It is found in the ruffle membrane. Its subcellular location is the membrane. The protein localises to the cytoplasmic vesicle membrane. The protein resides in the cytosol. It localises to the cell membrane. Plays a role in the reorganization of the microtubule cytoskeleton via its interaction with MAPT; this decreases microtubule stability and inhibits MAPT-induced microtubule polymerization. Plays a role in cellular transport processes by recruiting DNM1, DNM2 and DNM3 to membranes. Plays a role in the reorganization of the actin cytoskeleton and in neuron morphogenesis via its interaction with COBL and WASL, and by recruiting COBL to the cell cortex. Plays a role in the regulation of neurite formation, neurite branching and the regulation of neurite length. Required for normal synaptic vesicle endocytosis; this process retrieves previously released neurotransmitters to accommodate multiple cycles of neurotransmission. Required for normal excitatory and inhibitory synaptic transmission. Binds to membranes via its F-BAR domain and mediates membrane tubulation. The sequence is that of Protein kinase C and casein kinase substrate in neurons protein 1 (PACSIN1) from Homo sapiens (Human).